The sequence spans 3462 residues: Extracellular matrix-binding protein EbhA (3462 aa).

Residues 1–19 (MVQQSTTVAEAQGNEQKAN) show a composition bias toward polar residues. The tract at residues 1 to 21 (MVQQSTTVAEAQGNEQKANNV) is disordered. FIVAR domains lie at 24-82 (AMDK…INQA), 150-208 (AMGN…VEQA), 276-334 (AMTQ…ITAA), 402-460 (AMTQ…IQQA), 528-586 (AMTN…VEQA), 654-712 (AMTQ…VAQA), 780-838 (AMGT…VTQA), 906-964 (AMSN…ITRA), 1032-1093 (AMDQ…ITNE), 1158-1216 (AMEL…VNGA), 1284-1342 (AMGN…VEQA), 1410-1467 (AMHG…INQA), 1535-1593 (LMDA…VSSA), 1661-1719 (AMEA…VEQL), 1787-1845 (AMQA…VEQL), 1913-1971 (AMET…VDQV), 2039-2093 (SMDQ…VDQA), 2161-2220 (AMDQ…VIKL), and 2415-2471 (AMET…INGA). Residues 3267 to 3289 (VIKNAIGVVGISGLLASFWFFIA) traverse the membrane as a helical segment. Residues 3365–3462 (RRKEDEEDVE…KKKKAKKNKK (98 aa)) are disordered. Basic and acidic residues-rich tracts occupy residues 3380–3390 (TDEKVLKDNEH) and 3429–3439 (QKDNQSKDKKS). A compositionally biased stretch (basic residues) spans 3444–3462 (TSKKVAAKKKKKKAKKNKK).

It is found in the cell membrane. This Staphylococcus aureus (strain Newman) protein is Extracellular matrix-binding protein EbhA (ebhA).